Here is an 89-residue protein sequence, read N- to C-terminus: UPF0223 protein BCB4264_A4064 (89 aa).

It belongs to the UPF0223 family.

The polypeptide is UPF0223 protein BCB4264_A4064 (Bacillus cereus (strain B4264)).